Reading from the N-terminus, the 135-residue chain is MNIFEMSVDLAHRYLDVLSLRQSVIADNIANVDTPNFKRSKVTFEAELERAILNERASNLSLIRGNDKNLNGFKELGYLDVKPSRMLDYLSILKNDGNNVDIDSEMKNLIQNQMIYSLFTNIQAHHFKSVNIVIK.

The protein belongs to the flagella basal body rod proteins family. The basal body constitutes a major portion of the flagellar organelle and consists of a number of rings mounted on a central rod. In Gram-negative bacteria, at least four rings, L, P, S and M are present, whereas Gram-positive bacteria lack the L and P rings. The rod consists of about 26 subunits of FlgG in the distal portion, and FlgB, FlgC and FlgF build up the proximal portion of the rod with about 6 subunits each. Rod assembly occurs by export via the flagellum-specific pathway of its constituent proteins and by their incorporation into the rod structure in the probable order of FlgB, FlgC, FlgF and FlgG. Another protein, FliE, also assembles onto the stable rod structure.

It localises to the bacterial flagellum basal body. Structural component of flagellum, the bacterial motility apparatus. Part of the rod structure of flagellar basal body. The polypeptide is Flagellar basal body rod protein FlgB (flgB) (Borrelia hermsii).